We begin with the raw amino-acid sequence, 126 residues long: Aspartate 1-decarboxylase (126 aa).

Ser-25 serves as the catalytic Schiff-base intermediate with substrate; via pyruvic acid. Ser-25 is modified (pyruvic acid (Ser)). Residue Thr-57 participates in substrate binding. Tyr-58 acts as the Proton donor in catalysis. 72–74 (GAA) provides a ligand contact to substrate.

The protein belongs to the PanD family. As to quaternary structure, heterooctamer of four alpha and four beta subunits. The cofactor is pyruvate. In terms of processing, is synthesized initially as an inactive proenzyme, which is activated by self-cleavage at a specific serine bond to produce a beta-subunit with a hydroxyl group at its C-terminus and an alpha-subunit with a pyruvoyl group at its N-terminus.

Its subcellular location is the cytoplasm. It catalyses the reaction L-aspartate + H(+) = beta-alanine + CO2. Its pathway is cofactor biosynthesis; (R)-pantothenate biosynthesis; beta-alanine from L-aspartate: step 1/1. Functionally, catalyzes the pyruvoyl-dependent decarboxylation of aspartate to produce beta-alanine. This Campylobacter jejuni subsp. jejuni serotype O:6 (strain 81116 / NCTC 11828) protein is Aspartate 1-decarboxylase.